The chain runs to 878 residues: DNA mismatch repair protein MutS (878 aa).

ATP is bound at residue 629–636; the sequence is GPNMAGKS.

It belongs to the DNA mismatch repair MutS family.

Functionally, this protein is involved in the repair of mismatches in DNA. It is possible that it carries out the mismatch recognition step. This protein has a weak ATPase activity. In Roseobacter denitrificans (strain ATCC 33942 / OCh 114) (Erythrobacter sp. (strain OCh 114)), this protein is DNA mismatch repair protein MutS.